We begin with the raw amino-acid sequence, 95 residues long: Histone-like DNA-binding protein (95 aa).

It belongs to the bacterial histone-like protein family.

This Rickettsia felis (strain ATCC VR-1525 / URRWXCal2) (Rickettsia azadi) protein is Histone-like DNA-binding protein.